The following is a 1102-amino-acid chain: ATP-dependent DNA helicase MPH1 (1102 aa).

Residues 19–55 form a disordered region; the sequence is ALDKPATSGLHSREQEQQRDISNATPHTSTDLELEDF. Over residues 38 to 49 the composition is skewed to polar residues; that stretch reads DISNATPHTSTD. The Helicase ATP-binding domain occupies 147–315; that stretch reads IVKNGLFNNT…DVIDNLGVSH (169 aa). ATP is bound at residue 160-167; sequence LPTGLGKT. The DEAH box signature appears at 263-266; the sequence is DEAH. The Helicase C-terminal domain occupies 490 to 651; that stretch reads NLLNYFMDAG…GSRFNFRHDL (162 aa). 4 disordered regions span residues 672-702, 720-743, 818-837, and 858-1102; these read PIENTQDTSLPEPKARSTRGKKASKKKFNMP, ASKTKAKPNKSPKKAESKETDEIS, SQGIETRHTKPHGDTDKSRY, and SGRK…SESG. Basic residues predominate over residues 687–699; sequence RSTRGKKASKKKF. A compositionally biased stretch (basic and acidic residues) spans 822–837; that stretch reads ETRHTKPHGDTDKSRY. Over residues 1003 to 1019 the composition is skewed to low complexity; that stretch reads SSGAASKSGSTASTAAK. Acidic residues predominate over residues 1069–1082; that stretch reads SDDDDDDNDDEDDV.

This sequence belongs to the DEAD box helicase family. DEAH subfamily. FANCM sub-subfamily. In terms of assembly, interacts with the MHF histone-fold complex to form the FANCM-MHF complex.

It localises to the nucleus. The enzyme catalyses ATP + H2O = ADP + phosphate + H(+). Functionally, ATP-dependent DNA helicase involved in DNA damage repair by homologous recombination and in genome maintenance. Capable of unwinding D-loops. Plays a role in limiting crossover recombinants during mitotic DNA double-strand break (DSB) repair. Component of a FANCM-MHF complex which promotes gene conversion at blocked replication forks, probably by reversal of the stalled fork. The polypeptide is ATP-dependent DNA helicase MPH1 (Pyricularia oryzae (strain 70-15 / ATCC MYA-4617 / FGSC 8958) (Rice blast fungus)).